The following is a 440-amino-acid chain: Dynein axonemal assembly factor 11 (440 aa).

4 LRR repeats span residues 20-43 (IFSL…HKWC), 44-65 (RDLK…VGRL), 66-89 (KKLE…GCES), and 90-110 (LQKL…ETLK). The 19-residue stretch at 128–146 (YQGYRQYVVATVPQLQSLD) folds into the LRRCT domain. The span at 178 to 192 (EEREKQKSNANEHPE) shows a compositional bias: basic and acidic residues. Disordered stretches follow at residues 178-267 (EERE…RTLI) and 363-440 (PKKR…PPLM). Polar residues predominate over residues 193–211 (INQSLSESQNGTQQYPESS). Residues 236-259 (SRLEAHRHLEEKRRANEKEKEKPK) are compositionally biased toward basic and acidic residues. In terms of domain architecture, CS spans 276-374 (VNEPKLDFSL…KRTIRPTSVT (99 aa)). Polar residues predominate over residues 369–378 (RPTSVTSNQN). Composition is skewed to basic and acidic residues over residues 379–392 (NKKD…RELL) and 420–431 (GLEERPVSKDFV).

Belongs to the tilB family. In terms of assembly, interacts with dvl2. Interacts with kur. As to expression, expressed in kinocilia of hair cells.

The protein resides in the cytoplasm. It is found in the dynein axonemal particle. The protein localises to the cell projection. It localises to the cilium. Its function is as follows. Plays a crucial role in regulating cilia motility in pronephric tubules, cloaca and neural tube. Required for establishing left-right asymmetry of the body plan; controls cell fate and convergent extension (CE) movements during gastrulation, respectively, via the Wnt and the planar cell polarity (PCP) signaling pathways. Required for the proper development of renal glomeruli and tubules. The protein is Dynein axonemal assembly factor 11 (dnaaf11) of Danio rerio (Zebrafish).